The primary structure comprises 170 residues: Photosystem I assembly protein Ycf3 (170 aa).

TPR repeat units lie at residues Ala-35–Pro-68, Ser-72–Leu-105, and Gly-120–Asn-153.

Belongs to the Ycf3 family.

The protein resides in the plastid. It is found in the chloroplast thylakoid membrane. Its function is as follows. Essential for the assembly of the photosystem I (PSI) complex. May act as a chaperone-like factor to guide the assembly of the PSI subunits. In Oryza sativa (Rice), this protein is Photosystem I assembly protein Ycf3.